We begin with the raw amino-acid sequence, 435 residues long: Pregnancy-specific beta-1-glycoprotein 6 (435 aa).

The first 34 residues, 1 to 34 (MGPLSAPPCTQHITWKGLLLTASLLNFWNLPTTA), serve as a signal peptide directing secretion. The 109-residue stretch at 35 to 143 (QVIIEAKPPK…TGYFTVTLYS (109 aa)) folds into the Ig-like V-type domain. Asn61, Asn103, and Asn110 each carry an N-linked (GlcNAc...) asparagine glycan. The Cell attachment site signature appears at 126–128 (RGD). Ig-like C2-type domains follow at residues 148–233 (PSIS…VTLN), 241–326 (PYIT…VTLN), and 334–405 (PRIY…KEIS). Cystine bridges form between Cys168-Cys216, Cys261-Cys309, and Cys353-Cys393. Residues Asn198, Asn267, Asn302, and Asn386 are each glycosylated (N-linked (GlcNAc...) asparagine).

It belongs to the immunoglobulin superfamily. CEA family.

It is found in the secreted. The sequence is that of Pregnancy-specific beta-1-glycoprotein 6 (PSG6) from Homo sapiens (Human).